Reading from the N-terminus, the 113-residue chain is Parvalbumin beta (113 aa).

Position 1 is an N-acetylalanine (alanine 1). Cysteine 18 carries S-linked (Glc) cysteine glycosylation. EF-hand domains follow at residues phenylalanine 38 to aspartate 73 and leucine 77 to lysine 112. Ca(2+)-binding residues include aspartate 51, aspartate 53, glutamate 55, phenylalanine 57, glutamate 59, glutamate 62, aspartate 90, aspartate 92, aspartate 94, lysine 96, and glutamate 101.

This sequence belongs to the parvalbumin family. In terms of tissue distribution, muscle (at protein level).

Its function is as follows. In muscle, parvalbumin is thought to be involved in relaxation after contraction. It binds two calcium ions. The polypeptide is Parvalbumin beta (Gadus morhua subsp. callarias (Baltic cod)).